Reading from the N-terminus, the 476-residue chain is Calcium uptake protein 1, mitochondrial (476 aa).

The transit peptide at 1 to 33 directs the protein to the mitochondrion; that stretch reads MFRLNSLSALAELAVGSRWYHGGSQPIQIRRRL. Residues 68 to 106 form a disordered region; that stretch reads SDIGDKGKNKDEGDVCNHEKKTADLAPHPEEKKKKRSGF. The segment at 99 to 110 is polybasic region; the sequence is KKKKRSGFRDRK. Position 122 is a phosphoserine (Ser122). The tract at residues 126-129 is k/R-ring; that stretch reads KIFR. Positions 218-253 constitute an EF-hand 1 domain; sequence TPQRNFEIAFKMFDLNGDGEVDMEEFEQVQSIIRSQ. Ca(2+)-binding residues include Asp231, Asn233, Asp235, Glu237, and Glu242. The k/R-ring stretch occupies residues 259-263; that stretch reads RHRDR. Residues 408–443 enclose the EF-hand 2 domain; it reads LSDHVCDVVFALFDCDGNGELSNKEFVSIMKQRLMR. Ca(2+)-binding residues include Asp421, Asp423, Asn425, Glu427, and Glu432. An Asymmetric dimethylarginine modification is found at Arg455. A C-helix region region spans residues 455–465; it reads RLMQAMWKCAQ.

It belongs to the MICU1 family. MICU1 subfamily. Heterodimer; disulfide-linked; heterodimerizes with MICU2 or MICU3. Homodimer; disulfide-linked. Component of the uniplex complex, composed of MCU, EMRE/SMDT1, MICU1 and MICU2 (or MICU3) in a 4:4:1:1 stoichiometry. The composition of calcium sensors within the uniplex complex can differ depending on tissues: a MICU1 homodimer can be present instead of the MICU1-MICU2 heterodimer in skeletal-muscle and kidney. MICU1 is recruited to the uniplex complex by EMRE/SMDT1, and it associates with MCU at low calcium levels, occluding the pore of the MCU channel. Associates with the MICOS complex. Interacts with SLC25A23. Interacts with CHCHD4/MIA40; which introduces the interchain disulfide bond with MICU2. Interacts (when methylated) with UCP2; leading to decrease the calcium sensitivity of MICU1. Post-translationally, phosphorylation at Ser-122 by AKT1 impairs its maturation and stability. In terms of processing, asymmetric dimethylation at Arg-455 by PRMT1 decreases the calcium sensitivity of MICU1 by promoting interaction with UCP2. Degraded by YME1L1 when not complexed as homodimer or heterodimer. Not degraded when complexed as homodimer or heterodimer; the presence of the interchain disulfide bond protecting MICU1 from degradation by YME1L1. As to expression, expressed in epithelial cell lines. Strongly expressed in epidermal keratinocytes and dermal endothelial cells.

Its subcellular location is the mitochondrion intermembrane space. It localises to the mitochondrion inner membrane. Activated by spermine, kaempferol and SB202190, which bind MICU1 and prevent MCU pore occlusion in absence of calcium. Functionally, calcium sensor of the mitochondrial calcium uniporter (MCU) channel, which senses calcium level via its EF-hand domains. MICU1 and MICU2 (or MICU3) form a disulfide-linked heterodimer that stimulates and inhibits MCU activity, depending on the concentration of calcium. At low calcium levels, MICU1 occludes the pore of the MCU channel, preventing mitochondrial calcium uptake. At higher calcium levels, calcium-binding to MICU1 and MICU2 (or MICU3) induces a conformational change that weakens MCU-MICU1 interactions and moves the MICU1-MICU2 heterodimer away from the pore, allowing calcium permeation through the MCU channel. Also required to protect against manganese toxicity by preventing manganese uptake by MCU: mechanistically, manganese-binding to its EF-hand domains does not induce any conformational change, maintaining MCU pore occlusion. Also acts as a barrier for inhibitors of the MCU channel, such as ruthenium red or its derivative Ru360. Acts as a regulator of mitochondrial cristae structure independently of its ability to regulate the mitochondrial calcium uniporter channel. Regulates glucose-dependent insulin secretion in pancreatic beta-cells by regulating mitochondrial calcium uptake. Induces T-helper 1-mediated autoreactivity, which is accompanied by the release of IFNG. In terms of biological role, isoform that regulates mitochondrial calcium uniporter (MCU) in the skeletal muscle. Compared to other isoforms, this isoform has higher affinity for calcium, promoting mitochondrial calcium uptake at lower calcium concentrations. This allows a rapid response of mitochondrial metabolism and ensures sustained ATP production needed for resistance and strenuous exercise. The chain is Calcium uptake protein 1, mitochondrial from Homo sapiens (Human).